The sequence spans 700 residues: Calpain-2 catalytic subunit (700 aa).

At alanine 2 the chain carries N-acetylalanine. Residues 2–19 (AGIAMKLAKDREAAEGLG) constitute a propeptide, anchors to the small subunit. Positions 45 to 344 (LFQDPSFPAL…YSRLEICNLT (300 aa)) constitute a Calpain catalytic domain. The Ca(2+) site is built by isoleucine 89, glycine 91, and aspartate 96. Cysteine 105 is an active-site residue. Positions 175, 229, and 230 each coordinate Ca(2+). Catalysis depends on residues histidine 262 and asparagine 286. Ca(2+)-binding residues include glutamate 292, aspartate 299, glutamine 319, and glutamate 323. The interval 345–514 (PDTLTCDSYK…KKADYQTVDD (170 aa)) is domain III. The interval 515-529 (EIEANIEEIEANEED) is linker. Positions 530–700 (IGDGFRRLFA…LISWLSFSVL (171 aa)) are domain IV. Residues alanine 542, aspartate 545, glutamate 547, glutamate 552, aspartate 585, aspartate 587, serine 589, lysine 591, glutamate 596, aspartate 615, aspartate 617, serine 619, threonine 621, glutamate 626, aspartate 658, and asparagine 661 each coordinate Ca(2+). EF-hand domains lie at 572 to 605 (FSIE…TKIQ) and 602 to 637 (TKIQ…AGFK). Residues 667–700 (VRLEILFKIFKQLDPENTGTIQLDLISWLSFSVL) enclose the EF-hand 3 domain.

Belongs to the peptidase C2 family. As to quaternary structure, forms a heterodimer with a small (regulatory) subunit (CAPNS1). Interacts with CPEB3; this leads to cleavage of CPEB3. It depends on Ca(2+) as a cofactor. In terms of tissue distribution, ubiquitous.

It is found in the cytoplasm. It localises to the cell membrane. The catalysed reaction is Broad endopeptidase specificity.. Its activity is regulated as follows. Activated by 200-1000 micromolar concentrations of calcium and inhibited by calpastatin. Calcium-regulated non-lysosomal thiol-protease which catalyze limited proteolysis of substrates involved in cytoskeletal remodeling and signal transduction. Proteolytically cleaves MYOC at 'Arg-226'. Proteolytically cleaves CPEB3 following neuronal stimulation which abolishes CPEB3 translational repressor activity, leading to translation of CPEB3 target mRNAs. The polypeptide is Calpain-2 catalytic subunit (Capn2) (Rattus norvegicus (Rat)).